Consider the following 391-residue polypeptide: DNA repair protein NreA (391 aa).

The segment at 6–20 adopts a C4-type zinc-finger fold; it reads CAECKGKLLCGRSKC. The short motif at 382–389 is the PIP motif element; the sequence is QTSLASFF.

It belongs to the Nre family. In terms of assembly, interacts with the DNA polymerase sliding clamp (PCNA) via the PIP (PCNA-interacting peptide) motif.

Involved in DNA damage repair. This is DNA repair protein NreA from Archaeoglobus fulgidus (strain ATCC 49558 / DSM 4304 / JCM 9628 / NBRC 100126 / VC-16).